The following is a 575-amino-acid chain: Reverse gyrse subunit B (575 aa).

The segment at 1 to 39 adopts an RG N-terminal-type; degenerate zinc-finger fold; sequence MKIYYNNVCPNCSGRISNERLIKGLPCENDYPYEEGTIE. Residues Q83 and 100-107 contribute to the ATP site; that span reads APTGMGKT. The 161-residue stretch at 87 to 247 folds into the Helicase ATP-binding domain; the sequence is FIRAYKGYSF…KLKISGKDLE (161 aa). Positions 204-207 match the DEAD box motif; that stretch reads DDVD. The Helicase C-terminal domain occupies 316–465; the sequence is QTLELIKKLG…ALKMVEEAIE (150 aa).

The protein belongs to the DEAD box helicase family. DDVD subfamily. Heterodimer of an RgyA and RgyB subunit.

It is found in the cytoplasm. It carries out the reaction ATP + H2O = ADP + phosphate + H(+). Modifies the topological state of DNA by introducing positive supercoils in an ATP-dependent process. Binds to single-stranded DNA, transiently cleaves and then rejoins the end, introducing a positive supercoil in the process. The scissile phosphodiester is attacked by the catalytic tyrosine of the enzyme, resulting in the formation of a DNA-(5'-phosphotyrosyl)-enzyme intermediate. Probably involved in rewinding DNA strands in regions of the chromosome that have opened up to allow replication, transcription, DNA repair or for DNA protection. Reconstituted holoenzyme binds dsDNA a bit better than ssDNA, this subunit preferentially binds dsDNA. In isolation this subunit has DNA-stimulated ATPase activity that is stimulated by topoisomerase-domain containing RgyA. This subunit inhibits the relaxation activity of the topoisomerase subunit while promoting positive supercoiling. The polypeptide is Reverse gyrse subunit B (Nanoarchaeum equitans (strain Kin4-M)).